The sequence spans 329 residues: Synaptonemal complex central element protein 1 (329 aa).

The segment at 1–33 (MATRPQPLSVEPEGSADLLHGPEGARGRRGSTQ) is disordered. 2 coiled-coil regions span residues 28–168 (RRGS…ETLM) and 194–294 (KEQL…ILAQ). The disordered stretch occupies residues 295–329 (IQSTQKEEDSSWRTASPKPLEAHKETVQERPSSRT). A compositionally biased stretch (basic and acidic residues) spans 314–329 (LEAHKETVQERPSSRT).

This sequence belongs to the SYCE family. In terms of assembly, homodimer. Found in a complex with SYCP1 and SYCE2. Interacts with SYCP1, SYCE2 and SYCE3. Interacts with SIX6OS1.

The protein localises to the nucleus. The protein resides in the chromosome. Major component of the transverse central element of synaptonemal complexes (SCS), formed between homologous chromosomes during meiotic prophase. Requires SYCP1 in order to be incorporated into the central element. May have a role in the synaptonemal complex assembly, stabilization and recombination. This Rattus norvegicus (Rat) protein is Synaptonemal complex central element protein 1 (Syce1).